Here is a 93-residue protein sequence, read N- to C-terminus: Transcription factor PRE3 (93 aa).

A bHLH domain is found at 6–61; that stretch reads SRSRQSSGTSRISEDQINDLIIKLQQLLPELRDSRRSDKVSAARVLQDTCNYIRNL.

As to quaternary structure, homodimer. Interacts with BHLH 147, BHLH148, BHLH149, BHLH150 and IBH1. Interacts with SIEL. Expressed in root and shoot meristems, and young siliques. Low levels detected in all aerial tissues.

The protein resides in the nucleus. Its subcellular location is the cytoplasm. Functionally, atypical and probable non DNA-binding bHLH transcription factor required for MONOPTEROS-dependent root initiation in embryo. Promotes the correct definition of the hypophysis cell division plane. Transcriptionally controlled by MONOPTEROS. Moves from its site of synthesis in pro-embryos cells into the hypophysis. Regulates brassinosteroid (BR) signaling by sequestering negative BR signaling components. May function as positive regulator of gibberellin signaling. May play a role in the regulation of light signaling and possibly auxin signaling. This is Transcription factor PRE3 (PRE3) from Arabidopsis thaliana (Mouse-ear cress).